Here is a 215-residue protein sequence, read N- to C-terminus: Glutathione S-transferase D2 (215 aa).

A GST N-terminal domain is found at 1 to 80 (MDFYYMPGGG…YLVEKYGKDD (80 aa)). Glutathione is bound by residues 50 to 52 (HTI) and 64 to 66 (ESR). The 127-residue stretch at 86-212 (DPKKRAVINQ…MKALFDARKL (127 aa)) folds into the GST C-terminal domain.

It belongs to the GST superfamily. Delta family. Homodimer.

It catalyses the reaction RX + glutathione = an S-substituted glutathione + a halide anion + H(+). Conjugation of reduced glutathione to a wide number of exogenous and endogenous hydrophobic electrophiles. May be involved in detoxification. The protein is Glutathione S-transferase D2 of Drosophila melanogaster (Fruit fly).